Here is a 119-residue protein sequence, read N- to C-terminus: Holo-[acyl-carrier-protein] synthase (119 aa).

Mg(2+) is bound by residues Asp8 and Glu50.

It belongs to the P-Pant transferase superfamily. AcpS family. The cofactor is Mg(2+).

It is found in the cytoplasm. The catalysed reaction is apo-[ACP] + CoA = holo-[ACP] + adenosine 3',5'-bisphosphate + H(+). Functionally, transfers the 4'-phosphopantetheine moiety from coenzyme A to a Ser of acyl-carrier-protein. In Clavibacter michiganensis subsp. michiganensis (strain NCPPB 382), this protein is Holo-[acyl-carrier-protein] synthase.